The primary structure comprises 488 residues: 3-octaprenyl-4-hydroxybenzoate carboxy-lyase (488 aa).

Asparagine 172 lines the Mn(2+) pocket. Prenylated FMN contacts are provided by residues 175–177 (IYR), 189–191 (RWL), and 194–195 (RG). Glutamate 238 is a Mn(2+) binding site. The active-site Proton donor is the aspartate 287.

It belongs to the UbiD family. As to quaternary structure, homohexamer. Requires prenylated FMN as cofactor. It depends on Mn(2+) as a cofactor.

Its subcellular location is the cell membrane. It carries out the reaction a 4-hydroxy-3-(all-trans-polyprenyl)benzoate + H(+) = a 2-(all-trans-polyprenyl)phenol + CO2. It participates in cofactor biosynthesis; ubiquinone biosynthesis. Its function is as follows. Catalyzes the decarboxylation of 3-octaprenyl-4-hydroxy benzoate to 2-octaprenylphenol, an intermediate step in ubiquinone biosynthesis. The chain is 3-octaprenyl-4-hydroxybenzoate carboxy-lyase from Pseudomonas putida (strain GB-1).